Here is an 83-residue protein sequence, read N- to C-terminus: Mu-theraphotoxin-Hhn2j 4 (83 aa).

An N-terminal signal peptide occupies residues 1-21 (MKASMFLALAGSVLLFVVGYA). A propeptide spanning residues 22 to 48 (SESEEKEFPIELLSKIFAVDVFKGEER) is cleaved from the precursor. Disulfide bonds link Cys50–Cys65, Cys57–Cys70, and Cys64–Cys77. Leucine amide is present on Leu81.

This sequence belongs to the neurotoxin 10 (Hwtx-1) family. 15 (Hntx-3) subfamily. As to quaternary structure, monomer. In terms of tissue distribution, expressed by the venom gland.

The protein resides in the secreted. Functionally, lethal neurotoxin. Selectively blocks tetrodotoxin-sensitive voltage-gated sodium channels (Nav). Does not affect tetrodotoxin-resistant voltage-gated sodium channels or calcium channels. The polypeptide is Mu-theraphotoxin-Hhn2j 4 (Cyriopagopus hainanus (Chinese bird spider)).